The chain runs to 240 residues: uncharacterized protein (240 aa).

Residues 93 to 160 (QEASGCTVGE…AGGGAAASGQ (68 aa)) form a disordered region. Composition is skewed to low complexity over residues 110–119 (AQPSQPAQGG) and 129–150 (GGAE…PAEN).

This is an uncharacterized protein from Streptomyces viridochromogenes.